The sequence spans 171 residues: MDLKDYIRTVPDFPEPGILFRDITTLLHEPKALRYTIDSLAEQTGSLGADYVVGIESRGFMFGTPLAIKLDCGFVPVRKPGKLPAAVFKEEYTLEYGKNALEIHQDAFAAPSRVLVVDDLLATGGTAVAAAQLVERAGGTVVGFGFIIELTFLNGRAKLPEGPSAVALVSY.

It belongs to the purine/pyrimidine phosphoribosyltransferase family. In terms of assembly, homodimer.

The protein localises to the cytoplasm. It catalyses the reaction AMP + diphosphate = 5-phospho-alpha-D-ribose 1-diphosphate + adenine. It participates in purine metabolism; AMP biosynthesis via salvage pathway; AMP from adenine: step 1/1. Its function is as follows. Catalyzes a salvage reaction resulting in the formation of AMP, that is energically less costly than de novo synthesis. In Gloeobacter violaceus (strain ATCC 29082 / PCC 7421), this protein is Adenine phosphoribosyltransferase.